The chain runs to 408 residues: MMIKIASITKVENGSIVTPKGFSAIGTAIGLKKEKKDLGAIVCDVPASCAAVYTTNQIQAAPLQVTKDSITTERKLQAIIVNSGNANACTGMKGLQDAYEMRVLGAEHFGVKENYVAVASTGVIGVPLPMDIIRKGIATLIPAKEENEAHSFSEAILTTDLITKETCYEMSIDGKKVMIAGVAKGSGMIHPNMATMLSFITTDAHIEHDVLQTALSQITNHTFNQITVDGDTSTNDMVIAMASGLSETKPINMEHADWETFVFALQKVCEDLAKKIAQDGEGATKLIEVNVLGAQTNEEAKKIAKQIVGSSLVKTAIHGEDPNWGRIISSIGQSEVAINPNTIEITLQSIAVLKNSEPQTFSEEEMKERLQEDEIVINVYLHLGEETGSAWGCDLSYEYVKINACYRT.

6 residues coordinate substrate: Thr-158, Lys-184, Thr-195, Glu-281, Asn-403, and Thr-408. The active-site Nucleophile is the Thr-195.

This sequence belongs to the ArgJ family. In terms of assembly, heterotetramer of two alpha and two beta chains.

The protein localises to the cytoplasm. It carries out the reaction N(2)-acetyl-L-ornithine + L-glutamate = N-acetyl-L-glutamate + L-ornithine. The enzyme catalyses L-glutamate + acetyl-CoA = N-acetyl-L-glutamate + CoA + H(+). Its pathway is amino-acid biosynthesis; L-arginine biosynthesis; L-ornithine and N-acetyl-L-glutamate from L-glutamate and N(2)-acetyl-L-ornithine (cyclic): step 1/1. It participates in amino-acid biosynthesis; L-arginine biosynthesis; N(2)-acetyl-L-ornithine from L-glutamate: step 1/4. Its function is as follows. Catalyzes two activities which are involved in the cyclic version of arginine biosynthesis: the synthesis of N-acetylglutamate from glutamate and acetyl-CoA as the acetyl donor, and of ornithine by transacetylation between N(2)-acetylornithine and glutamate. In Bacillus thuringiensis subsp. konkukian (strain 97-27), this protein is Arginine biosynthesis bifunctional protein ArgJ.